Reading from the N-terminus, the 298-residue chain is 33 kDa chaperonin (298 aa).

2 disulfides stabilise this stretch: cysteine 237–cysteine 239 and cysteine 270–cysteine 273.

Belongs to the HSP33 family. Post-translationally, under oxidizing conditions two disulfide bonds are formed involving the reactive cysteines. Under reducing conditions zinc is bound to the reactive cysteines and the protein is inactive.

Its subcellular location is the cytoplasm. Redox regulated molecular chaperone. Protects both thermally unfolding and oxidatively damaged proteins from irreversible aggregation. Plays an important role in the bacterial defense system toward oxidative stress. The chain is 33 kDa chaperonin from Enterococcus faecalis (strain ATCC 700802 / V583).